A 438-amino-acid chain; its full sequence is Methylenetetrahydrofolate--tRNA-(uracil-5-)-methyltransferase TrmFO (438 aa).

Residue 9–14 coordinates FAD; that stretch reads GGGLAG.

Belongs to the MnmG family. TrmFO subfamily. It depends on FAD as a cofactor.

It localises to the cytoplasm. The catalysed reaction is uridine(54) in tRNA + (6R)-5,10-methylene-5,6,7,8-tetrahydrofolate + NADH + H(+) = 5-methyluridine(54) in tRNA + (6S)-5,6,7,8-tetrahydrofolate + NAD(+). It catalyses the reaction uridine(54) in tRNA + (6R)-5,10-methylene-5,6,7,8-tetrahydrofolate + NADPH + H(+) = 5-methyluridine(54) in tRNA + (6S)-5,6,7,8-tetrahydrofolate + NADP(+). In terms of biological role, catalyzes the folate-dependent formation of 5-methyl-uridine at position 54 (M-5-U54) in all tRNAs. The polypeptide is Methylenetetrahydrofolate--tRNA-(uracil-5-)-methyltransferase TrmFO (Lactobacillus johnsonii (strain CNCM I-12250 / La1 / NCC 533)).